Reading from the N-terminus, the 255-residue chain is Imidazole glycerol phosphate synthase subunit HisF (255 aa).

Residues Asp12 and Asp131 contribute to the active site.

The protein belongs to the HisA/HisF family. In terms of assembly, heterodimer of HisH and HisF.

Its subcellular location is the cytoplasm. It catalyses the reaction 5-[(5-phospho-1-deoxy-D-ribulos-1-ylimino)methylamino]-1-(5-phospho-beta-D-ribosyl)imidazole-4-carboxamide + L-glutamine = D-erythro-1-(imidazol-4-yl)glycerol 3-phosphate + 5-amino-1-(5-phospho-beta-D-ribosyl)imidazole-4-carboxamide + L-glutamate + H(+). Its pathway is amino-acid biosynthesis; L-histidine biosynthesis; L-histidine from 5-phospho-alpha-D-ribose 1-diphosphate: step 5/9. Functionally, IGPS catalyzes the conversion of PRFAR and glutamine to IGP, AICAR and glutamate. The HisF subunit catalyzes the cyclization activity that produces IGP and AICAR from PRFAR using the ammonia provided by the HisH subunit. The polypeptide is Imidazole glycerol phosphate synthase subunit HisF (Salinispora arenicola (strain CNS-205)).